Here is a 957-residue protein sequence, read N- to C-terminus: ERC protein 2 (957 aa).

The segment covering 1 to 13 (MYGSARTISNLEG) has biased composition (polar residues). Residues 1-44 (MYGSARTISNLEGSPSRSPRLPRSPRLGHRRTSSGGGGGTGKTL) are disordered. Low complexity predominate over residues 14–25 (SPSRSPRLPRSP). Phosphoserine occurs at positions 65 and 666. Positions 140-917 (RQVRDSTMLD…RMKLMADNYD (778 aa)) form a coiled coil. Over residues 922-943 (HYHHHHHHHHHRSPGRSQHSNH) the composition is skewed to basic residues. Residues 922–957 (HYHHHHHHHHHRSPGRSQHSNHRPSPDQDDEEGIWA) are disordered. Over residues 948–957 (DQDDEEGIWA) the composition is skewed to acidic residues.

In terms of assembly, interacts with BSN, ERC1, PPFIA1, PPFIA2, PPFIA3 and PPFIA4. Interacts through its C-terminus with the PDZ domain of RIMS1. Part of a complex consisting of ERC2, RIMS1 and UNC13A. In terms of tissue distribution, expressed throughout the central nervous system, including hippocampus, cortex, cerebellum and olfactory bulb.

The protein localises to the cytoplasm. Its subcellular location is the synapse. It localises to the presynaptic active zone. It is found in the cytoskeleton. In terms of biological role, thought to be involved in the organization of the cytomatrix at the nerve terminals active zone (CAZ) which regulates neurotransmitter release. Seems to act together with BSN. May recruit liprin-alpha proteins to the CAZ. The polypeptide is ERC protein 2 (Erc2) (Mus musculus (Mouse)).